A 331-amino-acid chain; its full sequence is Ketol-acid reductoisomerase (NADP(+)) (331 aa).

The KARI N-terminal Rossmann domain maps to Ala2–Thr182. NADP(+)-binding positions include Tyr25–Gln28, Ser51, Ser53, and Asp83–Gln86. The active site involves His108. Gly134 provides a ligand contact to NADP(+). Residues Thr183–Leu328 enclose the KARI C-terminal knotted domain. Mg(2+) is bound by residues Asp191, Glu195, Glu227, and Glu231. Ser252 is a binding site for substrate.

Belongs to the ketol-acid reductoisomerase family. In terms of assembly, homooctamer. The cofactor is Mg(2+).

It carries out the reaction (2R)-2,3-dihydroxy-3-methylbutanoate + NADP(+) = (2S)-2-acetolactate + NADPH + H(+). It catalyses the reaction (2R,3R)-2,3-dihydroxy-3-methylpentanoate + NADP(+) = (S)-2-ethyl-2-hydroxy-3-oxobutanoate + NADPH + H(+). It participates in amino-acid biosynthesis; L-isoleucine biosynthesis; L-isoleucine from 2-oxobutanoate: step 2/4. Its pathway is amino-acid biosynthesis; L-valine biosynthesis; L-valine from pyruvate: step 2/4. Involved in the biosynthesis of branched-chain amino acids (BCAA). Catalyzes an alkyl-migration followed by a ketol-acid reduction of (S)-2-acetolactate (S2AL) to yield (R)-2,3-dihydroxy-isovalerate. In the isomerase reaction, S2AL is rearranged via a Mg-dependent methyl migration to produce 3-hydroxy-3-methyl-2-ketobutyrate (HMKB). In the reductase reaction, this 2-ketoacid undergoes a metal-dependent reduction by NADPH to yield (R)-2,3-dihydroxy-isovalerate. The polypeptide is Ketol-acid reductoisomerase (NADP(+)) (Synechocystis sp. (strain ATCC 27184 / PCC 6803 / Kazusa)).